Reading from the N-terminus, the 300-residue chain is MADLSTSVAGIRLENPLMLASGILDENGYTMLDVMNNGAAAVVTKSIGMEERNGYSAPVIVEYGDSLINAVGLSNPGIDNFAEEIRIAKRSGKPVIGSVFASDAESFVNLGRKMQEYGCDAVELNLSCPHVKGFGLEVGSDPDLVEDIVNEMKSKISVPVFAKLSPNVSDIIEIAKAAEKADAYVLINTVKAMKIDIRARMPVLTNAYGGLSGPAIKPVGVRYVYEVKKETGKDIIGVGGITTYEDAVEYIMAGASAVQIGTALYTVGKSVFRNIISQMNTFMDDEKFHSIQDMVGVAIR.

FMN-binding positions include serine 21 and 45 to 46 (KS). Substrate contacts are provided by residues lysine 45, 69–73 (NAVGL), and asparagine 125. Asparagine 125 is an FMN binding site. Cysteine 128 acts as the Nucleophile in catalysis. FMN-binding residues include lysine 163 and isoleucine 187. 188-189 (NT) lines the substrate pocket. Residues glycine 213, 239-240 (GG), and 261-262 (GT) contribute to the FMN site.

It belongs to the dihydroorotate dehydrogenase family. Type 1 subfamily. In terms of assembly, heterotetramer of 2 PyrK and 2 PyrD type B subunits. Requires FMN as cofactor.

The protein resides in the cytoplasm. It catalyses the reaction (S)-dihydroorotate + NAD(+) = orotate + NADH + H(+). The protein operates within pyrimidine metabolism; UMP biosynthesis via de novo pathway; orotate from (S)-dihydroorotate (NAD(+) route): step 1/1. Catalyzes the conversion of dihydroorotate to orotate with NAD(+) as electron acceptor. This is Dihydroorotate dehydrogenase B (NAD(+)), catalytic subunit (pyrD) from Thermoplasma acidophilum (strain ATCC 25905 / DSM 1728 / JCM 9062 / NBRC 15155 / AMRC-C165).